The sequence spans 91 residues: MKPNIHPDNYRTVLFFDSSANEGWLIRSCAGTHGKTMVWTDGKEYLLFSLDTSSSSHPVYTGKQRNVNTEGRASKFNQRFQSVMSSFRKDK.

Belongs to the bacterial ribosomal protein bL31 family. Type B subfamily. Part of the 50S ribosomal subunit.

In Neisseria gonorrhoeae (strain ATCC 700825 / FA 1090), this protein is Large ribosomal subunit protein bL31B.